Reading from the N-terminus, the 653-residue chain is Forkhead box protein O1 (653 aa).

Disordered stretches follow at residues 1 to 64 and 117 to 156; these read MAEA…ASAA and LHPAPPQPPPPGPLSQHPPVPPAAGPLAGQPRKSSSSRRN. Thr-24 carries the phosphothreonine; by PKB/AKT1 or PKB/AKT2 and SGK1 modification. Positions 35-64 are enriched in low complexity; that stretch reads SNSATSSPAPSGGATANPDASAGLPPASAA. The span at 119–140 shows a compositional bias: pro residues; that stretch reads PAPPQPPPPGPLSQHPPVPPAA. The segment at residues 157–233 is a DNA-binding region (fork-head); sequence AWGNLSYADL…VQNEGTGKSS (77 aa). DNA-binding regions lie at residues 209–216 and 232–235; these read NSIRHNLS and SSWW. Ser-210 carries the phosphoserine; by STK4/MST1 modification. Phosphoserine is present on residues Ser-216, Ser-232, and Ser-233. Residues 232-335 form a disordered region; the sequence is SSWWMLNPEG…FSPIMTEQDD (104 aa). Residues Lys-243 and Lys-246 each carry the N6-acetyllysine modification. Residue Ser-247 is modified to Phosphoserine; by CDK1. 2 positions are modified to omega-N-methylarginine; by PRMT1: Arg-249 and Arg-251. Residues 249–251 carry the Nuclear localization signal motif; sequence RRR. Ser-254 carries the phosphoserine; by PKB/AKT1 and SGK1 modification. 3 positions are modified to N6-acetyllysine: Lys-260, Lys-263, and Lys-272. The segment at 281-561 is sufficient for interaction with NLK; the sequence is GAGDSPGSQF…RLTPVKTPLQ (281 aa). Ser-285 and Ser-296 each carry phosphoserine. Polar residues predominate over residues 307 to 324; the sequence is NWSTFRPRTSSNASTISG. Ser-317 carries the post-translational modification Phosphoserine; by PKB/AKT1 or PKB/AKT2. Position 320 is a phosphoserine; by CK1 and SGK1 (Ser-320). Position 323 is a phosphoserine (Ser-323). Ser-327 is subject to Phosphoserine; by DYRK1A. Residue Thr-331 is modified to Phosphothreonine. Residues 361–457 form a required for interaction with RUNX2 region; that stretch reads SEISNPENME…GGLNQFNCAQ (97 aa). At Lys-421 the chain carries N6-acetyllysine. The short motif at 460–464 is the Required for interaction with SIRT1 element; the sequence is LKELL.

In terms of assembly, interacts with LRPPRC. Interacts with RUNX2; the interaction inhibits RUNX2 transcriptional activity and mediates the IGF1/insulin-dependent BGLAP expression in osteoblasts Interacts with PPP2R1A; the interaction regulates the dephosphorylation of FOXO1 at Thr-24 and Ser-254 leading to its nuclear import. Interacts with NLK. Interacts with SIRT1; the interaction results in the deacetylation of FOXO1 leading to activation of FOXO1-mediated transcription of genes involved in DNA repair and stress resistance. Binds to CDK1. Interacts with the 14-3-3 proteins, YWHAG and YWHAZ; the interactions require insulin-stimulated phosphorylation on Thr-24, promote nuclear exit and loss of transcriptional activity. Interacts with SKP2; the interaction ubiquitinates FOXO1 leading to its proteasomal degradation. The interaction requires the presence of KRIT1. Interacts (via the C-terminal half) with ATF4 (via its DNA-binding domain); the interaction occurs in osteoblasts, regulates glucose homeostasis via suppression of beta-cell proliferation and subsequent decrease in insulin production. Interacts with PRMT1; the interaction methylates FOXO1, prevents PKB/AKT1 phosphorylation and retains FOXO1 in the nucleus. Interacts with EP300 and CREBBP; the interactions acetylate FOXO1. Interacts with SIRT2; the interaction is disrupted in response to oxidative stress or serum deprivation, leading to increased level of acetylated FOXO1, which promotes stress-induced autophagy by stimulating E1-like activating enzyme ATG7. Interacts (acetylated form) with ATG7; the interaction is increased in response to oxidative stress or serum deprivation and promotes the autophagic process leading to cell death. Interacts (acetylated form) with PPARG. Interacts with XBP1; this interaction is direct and leads to FOXO1 ubiquitination and degradation via the proteasome pathway. Interacts with WDFY2. Forms a complex with WDFY2 and AKT1. Interacts with CRY1. Interacts with PPIA/CYPA; the interaction promotes FOXO1 dephosphorylation, nuclear accumulation and transcriptional activity. Interacts with TOX4; FOXO1 is required for full induction of TOX4-dependent activity and the interaction is inhibited by insulin. Interacts (when phosphorylated on Ser-254) with STUB1/CHIP. Phosphorylation by NLK promotes nuclear export and inhibits the transcriptional activity. In response to growth factors, phosphorylation on Thr-24, Ser-254 and Ser-320 by PKB/AKT1 promotes nuclear export and inactivation of transactivational activity. Phosphorylation on Thr-24 is required for binding 14-3-3 proteins. Phosphorylation of Ser-254 decreases DNA-binding activity and promotes the phosphorylation of Thr-24 and Ser-317, permitting phosphorylation of Ser-320 and Ser-323, probably by CDK1, leading to nuclear exclusion and loss of function. Stress signals, such as response to oxygen or nitric oxide, attenuate the PKB/AKT1-mediated phosphorylation leading to nuclear retention. Phosphorylation of Ser-327 is independent of IGF1 and leads to reduced function. Dephosphorylated on Thr-24 and Ser-254 by PP2A in beta-cells under oxidative stress leading to nuclear retention. Phosphorylation of Ser-247 by CDK1 disrupts binding of 14-3-3 proteins leading to nuclear accumulation and has no effect on DNA binding nor transcriptional activity. Phosphorylation by STK4/MST1 on Ser-210, upon oxidative stress, inhibits binding to 14-3-3 proteins and nuclear export. PPIA/CYPA promotes its dephosphorylation on Ser-254. Post-translationally, ubiquitinated by SKP2. Ubiquitination leads to proteasomal degradation. Ubiquitinated by STUB1/CHIP; when Ser-254 is phosphorylated. In terms of processing, methylation inhibits AKT1-mediated phosphorylation at Ser-254 and is increased by oxidative stress. Acetylated. Acetylation at Lys-260 and Lys-272 are necessary for autophagic cell death induction. Deacetylated by SIRT2 in response to oxidative stress or serum deprivation, thereby negatively regulating FOXO1-mediated autophagic cell death. Once in the nucleus, acetylated by CREBBP/EP300. Acetylation diminishes the interaction with target DNA and attenuates the transcriptional activity. It increases the phosphorylation at Ser-254. Deacetylation by SIRT1 results in reactivation of the transcriptional activity. Oxidative stress by hydrogen peroxide treatment appears to promote deacetylation and uncoupling of insulin-induced phosphorylation. By contrast, resveratrol acts independently of acetylation. Acetylated at Lys-421, promoting its localization to the nucleus and transcription factor activity. Deacetylation at Lys-421 by SIRT6, promotes its translocation into the cytoplasm, preventing its transcription factor activity. Deacetylation and subsequent inhibition by SIRT6 has different effects depending on cell types: it inhibits gluconeogenesis in hepatocytes, promotes glucose sensing in pancreatic beta-cells and regulates lipid catabolism in brown adipocytes.

It localises to the cytoplasm. The protein resides in the nucleus. Functionally, transcription factor that is the main target of insulin signaling and regulates metabolic homeostasis in response to oxidative stress. Binds to the insulin response element (IRE) with consensus sequence 5'-TT[G/A]TTTTG-3' and the related Daf-16 family binding element (DBE) with consensus sequence 5'-TT[G/A]TTTAC-3'. Activity suppressed by insulin. Main regulator of redox balance and osteoblast numbers and controls bone mass. Orchestrates the endocrine function of the skeleton in regulating glucose metabolism. Also acts as a key regulator of chondrogenic commitment of skeletal progenitor cells in response to lipid availability: when lipids levels are low, translocates to the nucleus and promotes expression of SOX9, which induces chondrogenic commitment and suppresses fatty acid oxidation. Acts synergistically with ATF4 to suppress osteocalcin/BGLAP activity, increasing glucose levels and triggering glucose intolerance and insulin insensitivity. Also suppresses the transcriptional activity of RUNX2, an upstream activator of osteocalcin/BGLAP. Acts as an inhibitor of glucose sensing in pancreatic beta cells by acting as a transcription repressor and suppressing expression of PDX1. In hepatocytes, promotes gluconeogenesis by acting together with PPARGC1A and CEBPA to activate the expression of genes such as IGFBP1, G6PC1 and PCK1. Also promotes gluconeogenesis by directly promoting expression of PPARGC1A and G6PC1. Important regulator of cell death acting downstream of CDK1, PKB/AKT1 and STK4/MST1. Promotes neural cell death. Mediates insulin action on adipose tissue. Regulates the expression of adipogenic genes such as PPARG during preadipocyte differentiation and, adipocyte size and adipose tissue-specific gene expression in response to excessive calorie intake. Regulates the transcriptional activity of GADD45A and repair of nitric oxide-damaged DNA in beta-cells. Required for the autophagic cell death induction in response to starvation or oxidative stress in a transcription-independent manner. Mediates the function of MLIP in cardiomyocytes hypertrophy and cardiac remodeling. Positive regulator of apoptosis in cardiac smooth muscle cells as a result of its transcriptional activation of pro-apoptotic genes. Regulates endothelial cell (EC) viability and apoptosis in a PPIA/CYPA-dependent manner via transcription of CCL2 and BCL2L11 which are involved in EC chemotaxis and apoptosis. The chain is Forkhead box protein O1 (FOXO1) from Ictidomys tridecemlineatus (Thirteen-lined ground squirrel).